A 56-amino-acid chain; its full sequence is Large ribosomal subunit protein bL32 (56 aa).

Basic residues predominate over residues 1–20; that stretch reads MAVPKRRTSRSNTRSRRAQW. Residues 1-26 are disordered; sequence MAVPKRRTSRSNTRSRRAQWKAKAPA.

It belongs to the bacterial ribosomal protein bL32 family.

The chain is Large ribosomal subunit protein bL32 from Parafrankia sp. (strain EAN1pec).